The sequence spans 443 residues: SURP and G-patch domain-containing protein 1-like protein (443 aa).

Disordered regions lie at residues 45–71 (IISN…KGGK) and 83–141 (LAPP…TVKK). One copy of the SURP motif repeat lies at 142-185 (VADKLASFVAKHGRPFEHITRQKNPGDTPFKFLFDENCADYKYY). 3 disordered regions span residues 198-221 (QTKD…AIPL), 241-272 (TPVE…RGAD), and 285-325 (AQEE…HHMG). The span at 248–265 (SSRSAQASITRPSDSDSF) shows a compositional bias: polar residues. Residues 285–300 (AQEEKMRRPRQSKDEM) show a composition bias toward basic and acidic residues. The segment covering 307–316 (QGPSETSSTD) has biased composition (polar residues). Positions 360 to 407 (ADNVGHKLLSKMGWKEGEGIGSSRKGMADPIMAGDVKTNNLGVGASAP) constitute a G-patch domain.

It is found in the nucleus. The chain is SURP and G-patch domain-containing protein 1-like protein from Arabidopsis thaliana (Mouse-ear cress).